Reading from the N-terminus, the 402-residue chain is 1-deoxy-D-xylulose 5-phosphate reductoisomerase (402 aa).

The NADPH site is built by threonine 21, glycine 22, serine 23, isoleucine 24, glycine 47, asparagine 50, and asparagine 127. Lysine 128 is a binding site for 1-deoxy-D-xylulose 5-phosphate. Position 129 (glutamate 129) interacts with NADPH. Residue aspartate 151 coordinates Mn(2+). 1-deoxy-D-xylulose 5-phosphate is bound by residues serine 152, glutamate 153, serine 177, and histidine 200. Glutamate 153 is a binding site for Mn(2+). Residue glycine 206 coordinates NADPH. Positions 213, 218, 219, and 222 each coordinate 1-deoxy-D-xylulose 5-phosphate. A Mn(2+)-binding site is contributed by glutamate 222.

Belongs to the DXR family. It depends on Mg(2+) as a cofactor. Requires Mn(2+) as cofactor.

The catalysed reaction is 2-C-methyl-D-erythritol 4-phosphate + NADP(+) = 1-deoxy-D-xylulose 5-phosphate + NADPH + H(+). It functions in the pathway isoprenoid biosynthesis; isopentenyl diphosphate biosynthesis via DXP pathway; isopentenyl diphosphate from 1-deoxy-D-xylulose 5-phosphate: step 1/6. Catalyzes the NADPH-dependent rearrangement and reduction of 1-deoxy-D-xylulose-5-phosphate (DXP) to 2-C-methyl-D-erythritol 4-phosphate (MEP). The sequence is that of 1-deoxy-D-xylulose 5-phosphate reductoisomerase from Mycobacterium ulcerans (strain Agy99).